Consider the following 272-residue polypeptide: Acidic leucine-rich nuclear phosphoprotein 32 family member B (272 aa).

LRR repeat units lie at residues 18 to 38 (AVRE…EGLT), 43 to 64 (NLEF…PKLP), 65 to 87 (KLKK…AEEL), and 89 to 110 (SLTH…EPLK). The LRRCT domain maps to 123–161 (CEVTNRSDYRETVFRLLPQLSYLDGYDREDQEAPDSDVE). The segment covering 149–254 (DREDQEAPDS…DEDEDEEEEE (106 aa)) has biased composition (acidic residues). Positions 149 to 272 (DREDQEAPDS…RETDDEGEDD (124 aa)) are disordered. Residues Ser-164 and Ser-171 each carry the phosphoserine modification. Basic and acidic residues predominate over residues 255-265 (SGKGEKRKRET). The short motif at 260–263 (KRKR) is the Nuclear localization signal element. Residue Thr-265 is modified to Phosphothreonine.

This sequence belongs to the ANP32 family. Interacts with histones H3 and H4. Interacts with KLF5; this interaction induces promoter region-specific histone incorporation and inhibition of histone acetylation by ANP32B. Post-translationally, some glutamate residues are glycylated by TTLL8. This modification occurs exclusively on glutamate residues and results in a glycine chain on the gamma-carboxyl group. In terms of processing, directly cleaved by caspase-3/CASP3.

It localises to the nucleus. Functionally, multifunctional protein that is involved in the regulation of many processes including cell proliferation, apoptosis, cell cycle progression or transcription. Regulates the proliferation of neuronal stem cells, differentiation of leukemic cells and progression from G1 to S phase of the cell cycle. As negative regulator of caspase-3-dependent apoptosis, may act as an antagonist of ANP32A in regulating tissue homeostasis. Exhibits histone chaperone properties, able to recruit histones to certain promoters, thus regulating the transcription of specific genes. Also plays an essential role in the nucleocytoplasmic transport of specific mRNAs via the uncommon nuclear mRNA export receptor XPO1/CRM1. Participates in the regulation of adequate adaptive immune responses by acting on mRNA expression and cell proliferation. The chain is Acidic leucine-rich nuclear phosphoprotein 32 family member B (Anp32b) from Mus musculus (Mouse).